A 157-amino-acid chain; its full sequence is 2-C-methyl-D-erythritol 2,4-cyclodiphosphate synthase (157 aa).

Residues D8 and H10 each coordinate a divalent metal cation. 4-CDP-2-C-methyl-D-erythritol 2-phosphate-binding positions include 8–10 (DVH) and 34–35 (HS). A divalent metal cation is bound at residue H42. 4-CDP-2-C-methyl-D-erythritol 2-phosphate-binding positions include 56–58 (DIG), 132–135 (TTNE), and R142.

Belongs to the IspF family. Homotrimer. The cofactor is a divalent metal cation.

It catalyses the reaction 4-CDP-2-C-methyl-D-erythritol 2-phosphate = 2-C-methyl-D-erythritol 2,4-cyclic diphosphate + CMP. It functions in the pathway isoprenoid biosynthesis; isopentenyl diphosphate biosynthesis via DXP pathway; isopentenyl diphosphate from 1-deoxy-D-xylulose 5-phosphate: step 4/6. Functionally, involved in the biosynthesis of isopentenyl diphosphate (IPP) and dimethylallyl diphosphate (DMAPP), two major building blocks of isoprenoid compounds. Catalyzes the conversion of 4-diphosphocytidyl-2-C-methyl-D-erythritol 2-phosphate (CDP-ME2P) to 2-C-methyl-D-erythritol 2,4-cyclodiphosphate (ME-CPP) with a corresponding release of cytidine 5-monophosphate (CMP). The polypeptide is 2-C-methyl-D-erythritol 2,4-cyclodiphosphate synthase (Chlorobium luteolum (strain DSM 273 / BCRC 81028 / 2530) (Pelodictyon luteolum)).